The chain runs to 436 residues: MLDKDEDAEYERSVEMFRLKKLIHKLDNLKGSGTSMISLIINYKDQINPFMKMLVDEVGKASNIKSRVTRQNVTDALTSTMEKLKLYNKTPNNGLIIYCGLASEGDSGEKMFKIDMEPFKPINTSLYRCDSVFHTEEVKKLLEDNDRFGFLIMDGNGSLFGSVQGATRTVIQKFLVDLPKKHGRGGQSSNRFARIRTERRHNYLRKVAETMTAVFITNDRPNVKGLILAGSADFKTDLNKSDLFDPRLSPLVIKIVDIAYGGENGFNQAIELSSDALRNVKFVHEKKIVGRFFDEISKDTGRFVFGLKDTMEGLEYGAVEVLMIFENLEHNRLSLKDNNNTVTFKIFPKKETPSGNKFRDENGVEYEIIDNTPLSEWFLDNYKKFGTHLEIITDKSSEGNQFVKGFGGIGGILRYKMEQTHGDVETEDAFNEDDFI.

It belongs to the eukaryotic release factor 1 family. As to quaternary structure, heterodimer of two subunits, one of which binds GTP.

It is found in the cytoplasm. Directs the termination of nascent peptide synthesis (translation) in response to the termination codons UAA and possibly also UAG and UGA. The polypeptide is Eukaryotic peptide chain release factor subunit 1 (eRF1) (Dileptus margaritifer (Ciliate)).